The primary structure comprises 379 residues: Chaperone protein DnaJ (379 aa).

Residues 5-71 enclose the J domain; sequence DYYEILGVSR…EKRAMYDRFG (67 aa). The segment at 149 to 231 adopts a CR-type zinc-finger fold; it reads GTTIPIEYDR…CGGSGRIRKR (83 aa). Zn(2+) contacts are provided by Cys162, Cys165, Cys179, Cys182, Cys205, Cys208, Cys219, and Cys222. 4 CXXCXGXG motif repeats span residues 162 to 169, 179 to 186, 205 to 212, and 219 to 226; these read CSHCNGEG, CPKCHGTG, CNQCGGTG, and CHVCGGSG.

The protein belongs to the DnaJ family. In terms of assembly, homodimer. Zn(2+) serves as cofactor.

It is found in the cytoplasm. In terms of biological role, participates actively in the response to hyperosmotic and heat shock by preventing the aggregation of stress-denatured proteins and by disaggregating proteins, also in an autonomous, DnaK-independent fashion. Unfolded proteins bind initially to DnaJ; upon interaction with the DnaJ-bound protein, DnaK hydrolyzes its bound ATP, resulting in the formation of a stable complex. GrpE releases ADP from DnaK; ATP binding to DnaK triggers the release of the substrate protein, thus completing the reaction cycle. Several rounds of ATP-dependent interactions between DnaJ, DnaK and GrpE are required for fully efficient folding. Also involved, together with DnaK and GrpE, in the DNA replication of plasmids through activation of initiation proteins. This is Chaperone protein DnaJ from Thermosipho africanus (strain TCF52B).